The chain runs to 98 residues: NADH-ubiquinone oxidoreductase chain 4L (98 aa).

3 consecutive transmembrane segments (helical) span residues Met1–Ile21, Thr29–Thr49, and Ile59–Val79.

This sequence belongs to the complex I subunit 4L family. Core subunit of respiratory chain NADH dehydrogenase (Complex I) which is composed of 45 different subunits.

The protein localises to the mitochondrion inner membrane. It catalyses the reaction a ubiquinone + NADH + 5 H(+)(in) = a ubiquinol + NAD(+) + 4 H(+)(out). Functionally, core subunit of the mitochondrial membrane respiratory chain NADH dehydrogenase (Complex I) which catalyzes electron transfer from NADH through the respiratory chain, using ubiquinone as an electron acceptor. Part of the enzyme membrane arm which is embedded in the lipid bilayer and involved in proton translocation. The protein is NADH-ubiquinone oxidoreductase chain 4L (MT-ND4L) of Phascogale tapoatafa (Common wambenger).